The chain runs to 501 residues: Dipeptide and tripeptide permease A (501 aa).

Residues 1–34 (MSTANNNQPESISMNAFKQPKAFYLIFSIELWER) lie on the Cytoplasmic side of the membrane. The chain crosses the membrane as a helical span at residues 35–55 (FGYYGLQGIMAVYLVKMLGMS). Topologically, residues 56 to 59 (EADS) are periplasmic. A helical membrane pass occupies residues 60 to 80 (ITLFSSFSALVYGFVAIGGWL). The Cytoplasmic segment spans residues 81-89 (GDKVLGAKR). A run of 2 helical transmembrane segments spans residues 90-110 (VIVL…YSGH) and 111-131 (EIFW…LFKA). Residues 132-153 (NPSSLLSTCYSKDDPRLDGAFT) are Periplasmic-facing. Residues 154–174 (MYYMSINIGSFFSMLATPWLA) form a helical membrane-spanning segment. The Cytoplasmic segment spans residues 175 to 178 (AKYG). A helical membrane pass occupies residues 179–199 (WSVAFSLSVVGMLITLVNFWF). At 200-220 (CRKWVKNQGSKPDFLPLQFKK) the chain is on the periplasmic side. The helical transmembrane segment at 221–241 (LLMVLVGIIALITLSNWLLHN) threads the bilayer. Topologically, residues 242-246 (QIIAR) are cytoplasmic. The helical transmembrane segment at 247–267 (WALALVSLGIIFIFTKETLFL) threads the bilayer. Residues 268–274 (QGIARRR) lie on the Periplasmic side of the membrane. Residues 275 to 295 (MIVAFLLMLEAVIFFVLYSQM) form a helical membrane-spanning segment. Topologically, residues 296–320 (PTSLNFFAIHNVEHSIFGIGFEPEQ) are cytoplasmic. The helical transmembrane segment at 321–341 (FQALNPFWIMLASPILAAIYN) threads the bilayer. Residues 342–352 (KMGDRLPMPHK) lie on the Periplasmic side of the membrane. Residues 353–373 (FAFGMMLCSAAFLVLPWGASF) form a helical membrane-spanning segment. Over 374 to 383 (ANEHGIVSVN) the chain is Cytoplasmic. A helical transmembrane segment spans residues 384–404 (WLILSYALQSIGELMISGLGL). The Periplasmic portion of the chain corresponds to 405-414 (AMVAQLVPQR). The chain crosses the membrane as a helical span at residues 415–435 (LMGFIMGSWFLTTAAAALIAG). Topologically, residues 436-460 (KVAALTAVPSDAITDAHASLAIYSH) are cytoplasmic. A helical membrane pass occupies residues 461-481 (VFMQIGIVTAIIAVLMMLTAP). The Periplasmic portion of the chain corresponds to 482–501 (KLYRMTLAPSDHNDVKIMTQ).

This sequence belongs to the major facilitator superfamily. Proton-dependent oligopeptide transporter (POT/PTR) (TC 2.A.17) family. DtpA subfamily.

Its subcellular location is the cell inner membrane. Proton-dependent permease that transports di- and tripeptides. The polypeptide is Dipeptide and tripeptide permease A (Yersinia pestis).